The chain runs to 183 residues: tRNA-splicing endonuclease (183 aa).

Residues Tyr-120, His-128, and Lys-159 contribute to the active site.

The protein belongs to the tRNA-intron endonuclease family. Archaeal short subfamily. Homotetramer; although the tetramer contains four active sites, only two participate in the cleavage. Therefore, it should be considered as a dimer of dimers.

It catalyses the reaction pretRNA = a 3'-half-tRNA molecule with a 5'-OH end + a 5'-half-tRNA molecule with a 2',3'-cyclic phosphate end + an intron with a 2',3'-cyclic phosphate and a 5'-hydroxyl terminus.. Endonuclease that removes tRNA introns. Cleaves pre-tRNA at the 5'- and 3'-splice sites to release the intron. The products are an intron and two tRNA half-molecules bearing 2',3' cyclic phosphate and 5'-OH termini. Recognizes a pseudosymmetric substrate in which 2 bulged loops of 3 bases are separated by a stem of 4 bp. This chain is tRNA-splicing endonuclease, found in Pyrobaculum arsenaticum (strain DSM 13514 / JCM 11321 / PZ6).